The chain runs to 282 residues: MTAVSAMSWWQVIVLAVVQGLTEFLPVSSSGHLAIVSRILFTGDAGASFTAVSQLGTEVAVLVYFGRDIVRILHAWCRGLTVTLHRTADYWLGWYVIIGTIPICILGLVCKDEIRSGIRPLWVVATALVAFSGVIAFAEYVGRQNRCIEQLNWRDALVVGVAQTLALIPGVSRSGSTISAGLFLGLDRELAARFGFLLAIPAVFASGLFSIPDAFHPITEGMSATGAQLLVATVIAFVVGLVAVSWLLRFLVQHNLYWFVGYRIVVGVGVLILLAVKTVAAT.

The next 6 membrane-spanning stretches (helical) occupy residues 90 to 110, 121 to 141, 165 to 185, 194 to 214, 228 to 248, and 256 to 276; these read YWLGWYVIIGTIPICILGLVC, LWVVATALVAFSGVIAFAEYV, LALIPGVSRSGSTISAGLFLG, FGFLLAIPAVFASGLFSIPDA, QLLVATVIAFVVGLVAVSWLL, and LYWFVGYRIVVGVGVLILLAV.

The protein belongs to the UppP family.

It is found in the cell membrane. It catalyses the reaction di-trans,octa-cis-undecaprenyl diphosphate + H2O = di-trans,octa-cis-undecaprenyl phosphate + phosphate + H(+). Catalyzes the dephosphorylation of undecaprenyl diphosphate (UPP). Confers resistance to bacitracin. The polypeptide is Undecaprenyl-diphosphatase (Mycobacterium leprae (strain Br4923)).